The sequence spans 616 residues: Zinc metalloproteinase-disintegrin-like protein H3 (616 aa).

A signal peptide spans 1 to 20 (MIQVLLVIICLAVFPYQGSS). A propeptide spanning residues 21 to 193 (IILESGNVND…KKASQLNLTP (173 aa)) is cleaved from the precursor. At Glu194 the chain carries Pyrrolidone carboxylic acid (Glu). Residues 203–399 (KYIKLVIVAD…KMPQCILNKP (197 aa)) form the Peptidase M12B domain. 3 disulfides stabilise this stretch: Cys314–Cys394, Cys354–Cys378, and Cys356–Cys361. His339 is a binding site for Zn(2+). The short motif at 339-350 (HEMGHNLGMDHD) is the Metal-binding element. The active-site Proton acceptor is the Glu340. Residues His343 and His349 each coordinate Zn(2+). The N-linked (GlcNAc...) asparagine glycan is linked to Asn377. The 87-residue stretch at 407–493 (PAVCGNYLVE…ECPTDQFQRN (87 aa)) folds into the Disintegrin domain. Residues Val409, Asn412, Glu416, Glu419, and Asp422 each contribute to the Ca(2+) site. Intrachain disulfides connect Cys410-Cys439, Cys421-Cys434, Cys423-Cys429, Cys433-Cys456, Cys447-Cys453, Cys452-Cys478, Cys465-Cys485, Cys472-Cys504, Cys497-Cys509, Cys516-Cys566, Cys531-Cys577, Cys544-Cys554, Cys561-Cys603, and Cys597-Cys609. Positions 471 to 473 (ECD) match the D/ECD-tripeptide motif. 3 residues coordinate Ca(2+): Asp473, Asp476, and Asp488. N-linked (GlcNAc...) asparagine glycosylation is present at Asn506.

The protein belongs to the venom metalloproteinase (M12B) family. P-III subfamily. P-IIIc sub-subfamily. As to quaternary structure, homodimer; disulfide-linked. It depends on Zn(2+) as a cofactor. In terms of processing, N-glycosylated. Post-translationally, the N-terminus is blocked. As to expression, expressed by the venom gland (at protein level). Expressed by the venom gland.

The protein resides in the secreted. The proteolytic activity requires Zn(2+) and Ca(2+) ions. The alpha-fibrinogenase activity is completely inhibited by EDTA, but not by PMSF. Functionally, zinc metalloprotease that has fibrinogenolytic and hemorrhagic activities. Cleaves insulin B chain readily at '38-Ala-|-Leu-39' bond, and at a significantly slower rate, at '40-Tyr-|-Leu-41' bond. Hydrolyzes isolated extracellular matrix (ECM) bovine fibronectin, and basal membrane (BM) proteins human collagen IV and, to a lesser extent, murine laminin, in vitro. Cleaves murine nidogen (at '350-Ser-|-Phe-351' and '380-Tyr-|-Asn-381' bonds), but not laminin, in a solubilized BM preparation. Hydrolyzes plasma proteins involved in blood coagulation in vitro. It significantly prolongs thrombin time. Has potent alpha-fibrinogenase activity cleaving human fibrinogen alpha chain at '432-Lys-|-Leu-433' bond, but does not cleave beta or gamma chains. Hydrolyzes bovine prothrombin, but does not cleave it at '366-Arg-|-Ile-367' bond, which is necessary for the formation of active alpha-thrombin, however, the cleavage of fragment 1 from it leads to reduced alpha-thrombin formation. Hydrolyzes bovine factor X heavy chain at '211-Ser-|-Leu-212', '213-Asp-|-Leu-214' and '216-Gly-|-Leu-217' bonds activating it only marginally as does not cleave at the physiological activation site. Does not cleave factor X light chain. No hydrolysis or activation of plasminogen. The alpha-fibrinogenase activity likely contributes to its hemorrhagic activity, which in rat can be completely neutralized in vivo by anti-ammodytagin antibodies, which strongly cross-react with this protein. Has very weak collagen-, ADP- and ristocetin-induced platelet aggregation inhibition activity in vitro. The chain is Zinc metalloproteinase-disintegrin-like protein H3 from Vipera ammodytes ammodytes (Western sand viper).